Here is a 247-residue protein sequence, read N- to C-terminus: Uridylate kinase (247 aa).

Residue Lys-14–Gly-17 participates in ATP binding. Residues Gly-22 to Gly-27 are involved in allosteric activation by GTP. Gly-56 is a binding site for UMP. Residues Gly-57 and Arg-61 each contribute to the ATP site. Residues Asp-76 and Ile-137 to Thr-144 each bind UMP. The ATP site is built by Asn-165, Tyr-171, and Asp-174.

It belongs to the UMP kinase family. Homohexamer.

The protein localises to the cytoplasm. The catalysed reaction is UMP + ATP = UDP + ADP. It participates in pyrimidine metabolism; CTP biosynthesis via de novo pathway; UDP from UMP (UMPK route): step 1/1. With respect to regulation, allosterically activated by GTP. Inhibited by UTP. In terms of biological role, catalyzes the reversible phosphorylation of UMP to UDP. This is Uridylate kinase from Streptococcus pneumoniae (strain ATCC BAA-255 / R6).